A 704-amino-acid chain; its full sequence is Elongation factor G (704 aa).

One can recognise a tr-type G domain in the interval 8 to 291 (VRYRNIGISA…AVVEYLPSPS (284 aa)). GTP contacts are provided by residues 17–24 (AHIDAGKT), 88–92 (DTPGH), and 142–145 (NKMD).

This sequence belongs to the TRAFAC class translation factor GTPase superfamily. Classic translation factor GTPase family. EF-G/EF-2 subfamily.

It is found in the cytoplasm. Catalyzes the GTP-dependent ribosomal translocation step during translation elongation. During this step, the ribosome changes from the pre-translocational (PRE) to the post-translocational (POST) state as the newly formed A-site-bound peptidyl-tRNA and P-site-bound deacylated tRNA move to the P and E sites, respectively. Catalyzes the coordinated movement of the two tRNA molecules, the mRNA and conformational changes in the ribosome. In Blochmanniella pennsylvanica (strain BPEN), this protein is Elongation factor G.